A 783-amino-acid chain; its full sequence is uncharacterized protein (783 aa).

Residues 40–66 (CFNCKARKVRCDGANPCKACASNNLEC) constitute a DNA-binding region (zn(2)-C6 fungal-type).

Its subcellular location is the cytoplasm. It localises to the nucleus. This is an uncharacterized protein from Schizosaccharomyces pombe (strain 972 / ATCC 24843) (Fission yeast).